A 150-amino-acid polypeptide reads, in one-letter code: SsrA-binding protein (150 aa).

This sequence belongs to the SmpB family.

It is found in the cytoplasm. Functionally, required for rescue of stalled ribosomes mediated by trans-translation. Binds to transfer-messenger RNA (tmRNA), required for stable association of tmRNA with ribosomes. tmRNA and SmpB together mimic tRNA shape, replacing the anticodon stem-loop with SmpB. tmRNA is encoded by the ssrA gene; the 2 termini fold to resemble tRNA(Ala) and it encodes a 'tag peptide', a short internal open reading frame. During trans-translation Ala-aminoacylated tmRNA acts like a tRNA, entering the A-site of stalled ribosomes, displacing the stalled mRNA. The ribosome then switches to translate the ORF on the tmRNA; the nascent peptide is terminated with the 'tag peptide' encoded by the tmRNA and targeted for degradation. The ribosome is freed to recommence translation, which seems to be the essential function of trans-translation. This Chlamydia caviae (strain ATCC VR-813 / DSM 19441 / 03DC25 / GPIC) (Chlamydophila caviae) protein is SsrA-binding protein.